A 359-amino-acid chain; its full sequence is Histidinol-phosphate aminotransferase (359 aa).

Lysine 217 carries the N6-(pyridoxal phosphate)lysine modification.

The protein belongs to the class-II pyridoxal-phosphate-dependent aminotransferase family. Histidinol-phosphate aminotransferase subfamily. Homodimer. It depends on pyridoxal 5'-phosphate as a cofactor.

The enzyme catalyses L-histidinol phosphate + 2-oxoglutarate = 3-(imidazol-4-yl)-2-oxopropyl phosphate + L-glutamate. It participates in amino-acid biosynthesis; L-histidine biosynthesis; L-histidine from 5-phospho-alpha-D-ribose 1-diphosphate: step 7/9. The sequence is that of Histidinol-phosphate aminotransferase from Salmonella enteritidis PT4 (strain P125109).